The following is a 77-amino-acid chain: UPF0291 protein OB1671 (77 aa).

The interval D56 to H77 is disordered. A compositionally biased stretch (basic and acidic residues) spans P57–H77.

The protein belongs to the UPF0291 family.

The protein resides in the cytoplasm. This is UPF0291 protein OB1671 from Oceanobacillus iheyensis (strain DSM 14371 / CIP 107618 / JCM 11309 / KCTC 3954 / HTE831).